The following is a 314-amino-acid chain: Probable UDP-sugar transporter protein SLC35A4 (314 aa).

The Cytoplasmic portion of the chain corresponds to 1 to 20; it reads MIAISADESPESSSPALRLR. Residues 21–41 form a helical membrane-spanning segment; the sequence is WLFLLLLLVLIYGSHAPLLSL. At 42 to 54 the chain is on the lumenal side; that stretch reads CKTQAQIPFSASS. A helical membrane pass occupies residues 55–75; it reads CVLLIETSKLFISFASLLASG. Residues 76 to 88 are Cytoplasmic-facing; it reads SVSTLRISISMTT. The chain crosses the membrane as a helical span at residues 89 to 109; it reads ASPYAVPAVLYAFNNHLVVFM. Over 110–145 the chain is Lumenal; sequence QAYMDPSSFQVLSNLKIASTALLYTSCLGKRLHRRQ. Residues 146–166 traverse the membrane as a helical segment; the sequence is WFAMGLLVSAGVSHSCFSYDL. Topologically, residues 167–175 are cytoplasmic; it reads EGKRETAVY. A helical transmembrane segment spans residues 176 to 196; that stretch reads ITSWGLLLVLVYCFVSGLAAV. At 197-206 the chain is on the lumenal side; sequence YTERVLKSQR. Residues 207-227 traverse the membrane as a helical segment; sequence LPLSMQNLFLYTFGVVVNLAS. Residues 228-242 lie on the Cytoplasmic side of the membrane; the sequence is HLSGGEQKGFFEGYS. Residues 243–263 traverse the membrane as a helical segment; sequence AVVWVIVAGQVANGLLMSVVM. At 264 to 267 the chain is on the lumenal side; that stretch reads KHGT. A helical transmembrane segment spans residues 268-290; sequence GITRLFVISSAMLVNAVLSWGIL. The Cytoplasmic portion of the chain corresponds to 291-314; that stretch reads GVQLTGYFLFPVVLIGWAVYLYYT.

Belongs to the nucleotide-sugar transporter family. SLC35A subfamily.

It is found in the golgi apparatus membrane. It carries out the reaction CDP-L-ribitol(in) + CDP(out) = CDP-L-ribitol(out) + CDP(in). Functionally, mediates the transport of CDP-ribitol. Does not exhibit CMP-sialic acid, UDP-galactose and UDP-N-acetylglucosamine transport activity. This chain is Probable UDP-sugar transporter protein SLC35A4, found in Danio rerio (Zebrafish).